The following is an 847-amino-acid chain: B-cell receptor CD22 (847 aa).

A signal peptide spans 1–19 (MHLLGPWLLLLVLEYLAFS). One can recognise an Ig-like V-type domain in the interval 20-138 (DSSKWVFEHP…MERIHLNVSE (119 aa)). Residues 20–687 (DSSKWVFEHP…YYSPETIGRR (668 aa)) are Extracellular-facing. 3 cysteine pairs are disulfide-bonded: Cys39–Cys167, Cys44–Cys102, and Cys161–Cys219. Asn67, Asn101, and Asn112 each carry an N-linked (GlcNAc...) asparagine glycan. Arg120 provides a ligand contact to N-acetylneuraminate. N-linked (GlcNAc...) asparagine glycosylation is found at Asn135, Asn164, and Asn231. Ig-like C2-type domains follow at residues 143-235 (PHIQ…DTVQ), 242-326 (PKLE…VFLQ), 331-416 (PEPS…LDVQ), 419-500 (PKKV…VALN), 505-582 (PRDV…QTAS), and 593-676 (PRRL…STLT). Disulfide bonds link Cys265–Cys309, Cys353–Cys396, Cys442–Cys484, and Cys529–Cys571. Residues Asn363, Asn445, and Asn479 are each glycosylated (N-linked (GlcNAc...) asparagine). N-linked (GlcNAc...) asparagine glycosylation is found at Asn574 and Asn634. An intrachain disulfide couples Cys616 to Cys659. Residues 688 to 706 (VAVGLGSCLAILILAICGL) traverse the membrane as a helical segment. Topologically, residues 707-847 (KLQRRWKRTQ…ENVDYVILKH (141 aa)) are cytoplasmic. 3 positions are modified to phosphoserine: Ser725, Ser726, and Ser729. 2 consecutive short sequence motifs (ITIM motif) follow at residues 760 to 765 (ISYTTL) and 794 to 799 (VTYSAL). The residue at position 762 (Tyr762) is a Phosphotyrosine. Phosphotyrosine occurs at positions 807, 822, and 842. Short sequence motifs (ITIM motif) lie at residues 820–825 (IHYSEL) and 840–845 (VDYVIL).

The protein belongs to the immunoglobulin superfamily. SIGLEC (sialic acid binding Ig-like lectin) family. In terms of assembly, predominantly monomer of isoform CD22-beta. Also found as heterodimer of isoform CD22-beta and a shorter isoform. Interacts with PTPN6/SHP-1, LYN, SYK, PIK3R1/PIK3R2 and PLCG1 upon phosphorylation. Interacts with GRB2, INPP5D and SHC1 upon phosphorylation. May form a complex with INPP5D/SHIP, GRB2 and SHC1. Phosphorylation of Tyr-762, Tyr-807 and Tyr-822 are involved in binding to SYK, GRB2 and SYK, respectively. Phosphorylation of Tyr-842 is involved in binding to SYK, PLCG2 and PIK3R1/PIK3R2. Post-translationally, phosphorylated on tyrosine residues by LYN. As to expression, B-lymphocytes.

The protein resides in the cell membrane. Its function is as follows. Most highly expressed siglec (sialic acid-binding immunoglobulin-like lectin) on B-cells that plays a role in various aspects of B-cell biology including differentiation, antigen presentation, and trafficking to bone marrow. Binds to alpha 2,6-linked sialic acid residues of surface molecules such as CD22 itself, CD45 and IgM in a cis configuration. Can also bind to ligands on other cells as an adhesion molecule in a trans configuration. Acts as an inhibitory coreceptor on the surface of B-cells and inhibits B-cell receptor induced signaling, characterized by inhibition of the calcium mobilization and cellular activation. Mechanistically, the immunoreceptor tyrosine-based inhibitory motif domain is phosphorylated by the Src kinase LYN, which in turn leads to the recruitment of the protein tyrosine phosphatase 1/PTPN6, leading to the negative regulation of BCR signaling. If this negative signaling from is of sufficient strength, apoptosis of the B-cell can be induced. In Homo sapiens (Human), this protein is B-cell receptor CD22.